A 65-amino-acid polypeptide reads, in one-letter code: Large ribosomal subunit protein bL35 (65 aa).

Residues 1-26 form a disordered region; the sequence is MPKMKSNKGASKRFKKTASGGFKCKQ.

Belongs to the bacterial ribosomal protein bL35 family.

The polypeptide is Large ribosomal subunit protein bL35 (Idiomarina loihiensis (strain ATCC BAA-735 / DSM 15497 / L2-TR)).